A 380-amino-acid polypeptide reads, in one-letter code: MVHAPAKVAAAAAIPLLTPYKMGQLELSHRVVLAPLTRCRSYGNVPQPHAAVYYSQRATRGGLLIAEATDISPTAQGYPETPGIYTQQQIEAWKPIVDAVHRKGALFFLQIWHVGRVSTTDFQPNGQAPISSTDKQITPDDSGMVYSKPRRLRTDEIPQIIDDFRRAARNAIEAGFDGVEIHGAHGYLLEQFMKDSANDRTDEYGGSLENRCRFAVEVIDAVVAEVGAHRVGIRLSPFVDFMDCFDSDPVALGSYMVQQLNKHPGFLYCHMVEPRMAIIEGRRKIAHGLLPFRKQFNGTFIAAGGYDREEGNKVVADGYADLVAYGRLFLANPDLPRRFELDAPLNRYDRSTFYTQDPVVGYTDYPFLEEIDEESRTTYA.

FMN-binding positions include 35–37, A68, and Q110; that span reads PLT. 182 to 185 contributes to the substrate binding site; that stretch reads HGAH. The active-site Proton donor is Y187. R234 is an FMN binding site. Position 275 (R275) interacts with substrate. FMN-binding positions include G305 and 326–327; that span reads GR.

It belongs to the NADH:flavin oxidoreductase/NADH oxidase family. The cofactor is FMN.

The enzyme catalyses (1S,2S)-OPC-8 + NADP(+) = (9S,13S,15Z)-12-oxophyto-10,15-dienoate + NADPH + H(+). The protein operates within lipid metabolism; oxylipin biosynthesis. In terms of biological role, probably involved in the biosynthesis or metabolism of oxylipin signaling molecules. In vitro, reduces cis(-)-12-oxophytodienoic acid (cis(-)-OPDA) and to cis(-)-OPC-8:0. The polypeptide is 12-oxophytodienoate reductase 1 (Oryza sativa subsp. japonica (Rice)).